The following is a 197-amino-acid chain: Shikimate kinase (197 aa).

Residue 14–19 (GSGKST) participates in ATP binding. Ser-18 is a binding site for Mg(2+). Substrate-binding residues include Asp-36, Arg-60, and Gly-82. Arg-120 serves as a coordination point for ATP. Position 147 (Arg-147) interacts with substrate.

Belongs to the shikimate kinase family. As to quaternary structure, monomer. Requires Mg(2+) as cofactor.

The protein resides in the cytoplasm. It catalyses the reaction shikimate + ATP = 3-phosphoshikimate + ADP + H(+). It participates in metabolic intermediate biosynthesis; chorismate biosynthesis; chorismate from D-erythrose 4-phosphate and phosphoenolpyruvate: step 5/7. Catalyzes the specific phosphorylation of the 3-hydroxyl group of shikimic acid using ATP as a cosubstrate. The polypeptide is Shikimate kinase (Prosthecochloris aestuarii (strain DSM 271 / SK 413)).